Reading from the N-terminus, the 247-residue chain is Carboxy-S-adenosyl-L-methionine synthase (247 aa).

Residues Tyr40, Gly65–Ser67, Asp90–Asn91, Asp122–Ile123, Asn137, and Arg204 contribute to the S-adenosyl-L-methionine site.

This sequence belongs to the class I-like SAM-binding methyltransferase superfamily. Cx-SAM synthase family. Homodimer.

The enzyme catalyses prephenate + S-adenosyl-L-methionine = carboxy-S-adenosyl-L-methionine + 3-phenylpyruvate + H2O. Functionally, catalyzes the conversion of S-adenosyl-L-methionine (SAM) to carboxy-S-adenosyl-L-methionine (Cx-SAM). The polypeptide is Carboxy-S-adenosyl-L-methionine synthase (Pseudomonas putida (strain ATCC 700007 / DSM 6899 / JCM 31910 / BCRC 17059 / LMG 24140 / F1)).